We begin with the raw amino-acid sequence, 596 residues long: Actin-histidine N-methyltransferase (596 aa).

S-adenosyl-L-methionine-binding positions include arginine 75, 104 to 106, arginine 254, 275 to 279, and 325 to 327; these read EGY, DMCNH, and NGF. In terms of domain architecture, SET spans 94-314; that stretch reads DGFEISNFAD…EGEQIYIFYG (221 aa). The disordered stretch occupies residues 556 to 596; the sequence is QCKDLNGTQEDPPGGGAVVKEIEKHDPSAKRTEGEPKDAGK. A compositionally biased stretch (basic and acidic residues) spans 575 to 596; sequence KEIEKHDPSAKRTEGEPKDAGK.

It belongs to the class V-like SAM-binding methyltransferase superfamily. SETD3 actin-histidine methyltransferase family.

The protein resides in the cytoplasm. It carries out the reaction L-histidyl-[protein] + S-adenosyl-L-methionine = N(tele)-methyl-L-histidyl-[protein] + S-adenosyl-L-homocysteine + H(+). Functionally, protein-histidine N-methyltransferase that specifically mediates 3-methylhistidine (tele-methylhistidine) methylation of actin at 'His-73'. Does not have protein-lysine N-methyltransferase activity and probably only catalyzes histidine methylation of actin. The polypeptide is Actin-histidine N-methyltransferase (Danio rerio (Zebrafish)).